The following is a 212-amino-acid chain: Imidazole glycerol phosphate synthase subunit HisH 2 (212 aa).

One can recognise a Glutamine amidotransferase type-1 domain in the interval 4–211 (HLGLIDYGMG…LDWLQRGAPI (208 aa)). The active-site Nucleophile is the Cys82. Active-site residues include His186 and Glu188.

As to quaternary structure, heterodimer of HisH and HisF.

It localises to the cytoplasm. It carries out the reaction 5-[(5-phospho-1-deoxy-D-ribulos-1-ylimino)methylamino]-1-(5-phospho-beta-D-ribosyl)imidazole-4-carboxamide + L-glutamine = D-erythro-1-(imidazol-4-yl)glycerol 3-phosphate + 5-amino-1-(5-phospho-beta-D-ribosyl)imidazole-4-carboxamide + L-glutamate + H(+). The catalysed reaction is L-glutamine + H2O = L-glutamate + NH4(+). Its pathway is amino-acid biosynthesis; L-histidine biosynthesis; L-histidine from 5-phospho-alpha-D-ribose 1-diphosphate: step 5/9. Functionally, IGPS catalyzes the conversion of PRFAR and glutamine to IGP, AICAR and glutamate. The HisH subunit provides the glutamine amidotransferase activity that produces the ammonia necessary to HisF for the synthesis of IGP and AICAR. This is Imidazole glycerol phosphate synthase subunit HisH 2 (hisH2) from Parasynechococcus marenigrum (strain WH8102).